Here is a 251-residue protein sequence, read N- to C-terminus: Triosephosphate isomerase (251 aa).

Residue 9 to 11 participates in substrate binding; it reads NWK. The active-site Electrophile is His-95. Glu-167 (proton acceptor) is an active-site residue. Substrate contacts are provided by residues Gly-173, Ser-213, and 234 to 235; that span reads GG. Ser-213 bears the Phosphoserine mark.

Belongs to the triosephosphate isomerase family. In terms of assembly, homodimer.

It localises to the cytoplasm. It catalyses the reaction D-glyceraldehyde 3-phosphate = dihydroxyacetone phosphate. It participates in carbohydrate biosynthesis; gluconeogenesis. The protein operates within carbohydrate degradation; glycolysis; D-glyceraldehyde 3-phosphate from glycerone phosphate: step 1/1. Functionally, involved in the gluconeogenesis. Catalyzes stereospecifically the conversion of dihydroxyacetone phosphate (DHAP) to D-glyceraldehyde-3-phosphate (G3P). This Bacillus cereus (strain AH820) protein is Triosephosphate isomerase.